Reading from the N-terminus, the 293-residue chain is Heterogeneous nuclear ribonucleoprotein C-like 1 (293 aa).

One can recognise an RRM domain in the interval 16–87 (SRVFIGNLNT…QVVDINLAAE (72 aa)). Disordered stretches follow at residues 137–177 (ALAV…KLKG) and 206–293 (KEQS…QDDS). Positions 177-225 (GDDLQAIKQELTQIKQKVDSLLENLEKIEKEQSKQEVEVKNAKSEEEQS) form a coiled coil. Composition is skewed to basic and acidic residues over residues 206–222 (KEQS…KSEE) and 229–240 (MKKDETHVKMES). 2 stretches are compositionally biased toward acidic residues: residues 242 to 267 (GGAE…DDQL) and 275 to 284 (KEAEEGEDDR).

The protein belongs to the RRM HNRPC family. RALY subfamily.

The protein resides in the nucleus. Functionally, may play a role in nucleosome assembly by neutralizing basic proteins such as A and B core hnRNPs. In Homo sapiens (Human), this protein is Heterogeneous nuclear ribonucleoprotein C-like 1 (HNRNPCL1).